Consider the following 307-residue polypeptide: Protoheme IX farnesyltransferase (307 aa).

Transmembrane regions (helical) follow at residues 31–51, 55–75, 103–123, 125–145, 153–173, 179–199, 223–243, 246–266, and 285–305; these read VTQL…PGMV, VLIG…AINC, TLVF…VYAN, LTMW…TILL, IVIG…AVAG, AWFL…ALAL, LLHI…PFVY, SGYI…AYAW, and ILYL…KFVP.

This sequence belongs to the UbiA prenyltransferase family. Protoheme IX farnesyltransferase subfamily.

It is found in the cell inner membrane. It catalyses the reaction heme b + (2E,6E)-farnesyl diphosphate + H2O = Fe(II)-heme o + diphosphate. The protein operates within porphyrin-containing compound metabolism; heme O biosynthesis; heme O from protoheme: step 1/1. Converts heme B (protoheme IX) to heme O by substitution of the vinyl group on carbon 2 of heme B porphyrin ring with a hydroxyethyl farnesyl side group. This Cupriavidus necator (strain ATCC 17699 / DSM 428 / KCTC 22496 / NCIMB 10442 / H16 / Stanier 337) (Ralstonia eutropha) protein is Protoheme IX farnesyltransferase.